Here is a 396-residue protein sequence, read N- to C-terminus: 8-amino-7-oxononanoate synthase (396 aa).

Substrate is bound at residue Arg-29. Pyridoxal 5'-phosphate is bound at residue 116–117 (GY). His-141 is a binding site for substrate. Pyridoxal 5'-phosphate contacts are provided by Ser-187, His-215, and Thr-243. Lys-246 is subject to N6-(pyridoxal phosphate)lysine. A substrate-binding site is contributed by Thr-360.

This sequence belongs to the class-II pyridoxal-phosphate-dependent aminotransferase family. BioF subfamily. Homodimer. The cofactor is pyridoxal 5'-phosphate.

The catalysed reaction is 6-carboxyhexanoyl-[ACP] + L-alanine + H(+) = (8S)-8-amino-7-oxononanoate + holo-[ACP] + CO2. It functions in the pathway cofactor biosynthesis; biotin biosynthesis. Catalyzes the decarboxylative condensation of pimeloyl-[acyl-carrier protein] and L-alanine to produce 8-amino-7-oxononanoate (AON), [acyl-carrier protein], and carbon dioxide. In Nitrosospira multiformis (strain ATCC 25196 / NCIMB 11849 / C 71), this protein is 8-amino-7-oxononanoate synthase.